Consider the following 121-residue polypeptide: Large ribosomal subunit protein uL14 (121 aa).

Belongs to the universal ribosomal protein uL14 family. In terms of assembly, part of the 50S ribosomal subunit. Forms a cluster with proteins L3 and L19. In the 70S ribosome, L14 and L19 interact and together make contacts with the 16S rRNA in bridges B5 and B8.

Its function is as follows. Binds to 23S rRNA. Forms part of two intersubunit bridges in the 70S ribosome. The chain is Large ribosomal subunit protein uL14 from Synechococcus sp. (strain CC9902).